A 145-amino-acid chain; its full sequence is Peptide methionine sulfoxide reductase MsrB (145 aa).

Positions 4-127 (SDELKQRIGE…NSAALKFIPY (124 aa)) constitute a MsrB domain. The active-site Nucleophile is Cys-116.

Belongs to the MsrB Met sulfoxide reductase family.

It catalyses the reaction L-methionyl-[protein] + [thioredoxin]-disulfide + H2O = L-methionyl-(R)-S-oxide-[protein] + [thioredoxin]-dithiol. This chain is Peptide methionine sulfoxide reductase MsrB, found in Streptococcus pyogenes serotype M3 (strain ATCC BAA-595 / MGAS315).